A 290-amino-acid chain; its full sequence is Arylamine N-acetyltransferase 1 (290 aa).

The residue at position 1 (Met-1) is an N-acetylmethionine. Cys-68 serves as the catalytic Acyl-thioester intermediate. Residue Ser-103 participates in CoA binding. 106–107 contributes to the substrate binding site; that stretch reads IH. Catalysis depends on residues His-107 and Asp-122. 2 residues coordinate CoA: Tyr-208 and Ser-287.

The protein belongs to the arylamine N-acetyltransferase family.

Its subcellular location is the cytoplasm. The catalysed reaction is an arylamine + acetyl-CoA = an N-acetylarylamine + CoA. Functionally, participates in the detoxification of a plethora of hydrazine and arylamine drugs. The protein is Arylamine N-acetyltransferase 1 (NAT1) of Mesocricetus auratus (Golden hamster).